Consider the following 237-residue polypeptide: Phosphoribosylaminoimidazole-succinocarboxamide synthase (237 aa).

It belongs to the SAICAR synthetase family.

It carries out the reaction 5-amino-1-(5-phospho-D-ribosyl)imidazole-4-carboxylate + L-aspartate + ATP = (2S)-2-[5-amino-1-(5-phospho-beta-D-ribosyl)imidazole-4-carboxamido]succinate + ADP + phosphate + 2 H(+). It functions in the pathway purine metabolism; IMP biosynthesis via de novo pathway; 5-amino-1-(5-phospho-D-ribosyl)imidazole-4-carboxamide from 5-amino-1-(5-phospho-D-ribosyl)imidazole-4-carboxylate: step 1/2. The protein is Phosphoribosylaminoimidazole-succinocarboxamide synthase of Listeria monocytogenes serotype 4a (strain HCC23).